Reading from the N-terminus, the 184-residue chain is Photosystem I assembly protein Ycf4 (184 aa).

Transmembrane regions (helical) follow at residues 22–42 (FCWAFILFLGSLGFLLVGTSS) and 57–77 (IIFFPQGIVMSFYGIAGLFIS).

It belongs to the Ycf4 family.

The protein localises to the plastid. The protein resides in the chloroplast thylakoid membrane. Seems to be required for the assembly of the photosystem I complex. The sequence is that of Photosystem I assembly protein Ycf4 from Lepidium virginicum (Virginia pepperweed).